Consider the following 707-residue polypeptide: Ribosomal RNA large subunit methyltransferase K/L (707 aa).

A THUMP domain is found at 44 to 155 (VIYNLCLWSR…NDILTVSFDL (112 aa)).

The protein belongs to the methyltransferase superfamily. RlmKL family.

It localises to the cytoplasm. It carries out the reaction guanosine(2445) in 23S rRNA + S-adenosyl-L-methionine = N(2)-methylguanosine(2445) in 23S rRNA + S-adenosyl-L-homocysteine + H(+). The catalysed reaction is guanosine(2069) in 23S rRNA + S-adenosyl-L-methionine = N(2)-methylguanosine(2069) in 23S rRNA + S-adenosyl-L-homocysteine + H(+). Specifically methylates the guanine in position 2445 (m2G2445) and the guanine in position 2069 (m7G2069) of 23S rRNA. The sequence is that of Ribosomal RNA large subunit methyltransferase K/L from Legionella pneumophila (strain Corby).